The following is a 421-amino-acid chain: Phosphatidate cytidylyltransferase 1 (421 aa).

M1 bears the N-acetylmethionine mark. A compositionally biased stretch (polar residues) spans 1-12 (MEEENVTSSPST). The segment at 1 to 26 (MEEENVTSSPSTPVHRLRHRRRSNEV) is disordered. The next 8 helical transmembrane spans lie at 60–80 (IGGF…MVVV), 102–122 (LPYI…FVYG), 149–169 (YHMA…ILTL), 183–203 (WTHM…ANIF), 206–226 (IFWF…AYIF), 246–266 (GFIG…NILG), 321–341 (LCLG…ASGF), and 369–389 (VMAV…SVSV).

The protein belongs to the CDS family. Requires Mg(2+) as cofactor.

Its subcellular location is the membrane. The enzyme catalyses a 1,2-diacyl-sn-glycero-3-phosphate + CTP + H(+) = a CDP-1,2-diacyl-sn-glycerol + diphosphate. It participates in phospholipid metabolism; CDP-diacylglycerol biosynthesis; CDP-diacylglycerol from sn-glycerol 3-phosphate: step 3/3. Functionally, may be involved in the synthesis of minor phospholipids and in modulation of IP3-mediated signal transduction. The sequence is that of Phosphatidate cytidylyltransferase 1 from Arabidopsis thaliana (Mouse-ear cress).